The following is a 148-amino-acid chain: uncharacterized protein (148 aa).

This is an uncharacterized protein from Acanthamoeba polyphaga mimivirus (APMV).